Here is a 30-residue protein sequence, read N- to C-terminus: GWRDWLKKGKEWIKAKGPGIVKAALKAAVQ.

Belongs to the ponericin-G family. Expressed by the venom gland.

It localises to the secreted. Functionally, shows a broad spectrum of activity against both Gram-positive and Gram-negative bacteria. Also has antimicrobial activity against S.cerevisiae. Has insecticidal and non-hemolytic activity. The polypeptide is U1-poneritoxin-Ni3b (Neoponera inversa (Ant)).